Consider the following 165-residue polypeptide: Mid1-interacting protein 1-like (165 aa).

The segment at 46-67 (DQESHASVSHNNNNNNEPSFPN) is disordered.

Belongs to the SPOT14 family.

Its subcellular location is the nucleus. It localises to the cytoplasm. It is found in the cytoskeleton. Functionally, involved in stabilization of microtubules. May play a role in the regulation of lipogenesis. The sequence is that of Mid1-interacting protein 1-like from Danio rerio (Zebrafish).